The sequence spans 295 residues: ATP synthase gamma chain (295 aa).

It belongs to the ATPase gamma chain family. In terms of assembly, F-type ATPases have 2 components, CF(1) - the catalytic core - and CF(0) - the membrane proton channel. CF(1) has five subunits: alpha(3), beta(3), gamma(1), delta(1), epsilon(1). CF(0) has three main subunits: a, b and c.

The protein resides in the cell membrane. Produces ATP from ADP in the presence of a proton gradient across the membrane. The gamma chain is believed to be important in regulating ATPase activity and the flow of protons through the CF(0) complex. This is ATP synthase gamma chain from Caldanaerobacter subterraneus subsp. tengcongensis (strain DSM 15242 / JCM 11007 / NBRC 100824 / MB4) (Thermoanaerobacter tengcongensis).